We begin with the raw amino-acid sequence, 464 residues long: Chromosomal replication initiator protein DnaA (464 aa).

The interval 1 to 90 is domain I, interacts with DnaA modulators; sequence MNNDNTEVLE…KYWQDEDQSI (90 aa). A domain II region spans residues 90–126; that stretch reads ICSVDICVVSNQDPNLLVDIKDRVDRGIKGNCDNVSS. Residues 127–345 form a domain III, AAA+ region region; sequence PLDPRFTFDN…GALNKVVAHS (219 aa). ATP-binding residues include glycine 173, glycine 175, lysine 176, and threonine 177. A domain IV, binds dsDNA region spans residues 346–464; it reads SLVGCSITLD…DINLLNRMLR (119 aa).

It belongs to the DnaA family. Oligomerizes as a right-handed, spiral filament on DNA at oriC.

Its subcellular location is the cytoplasm. Plays an essential role in the initiation and regulation of chromosomal replication. ATP-DnaA binds to the origin of replication (oriC) to initiate formation of the DNA replication initiation complex once per cell cycle. Binds the DnaA box (a 9 base pair repeat at the origin) and separates the double-stranded (ds)DNA. Forms a right-handed helical filament on oriC DNA; dsDNA binds to the exterior of the filament while single-stranded (ss)DNA is stabiized in the filament's interior. The ATP-DnaA-oriC complex binds and stabilizes one strand of the AT-rich DNA unwinding element (DUE), permitting loading of DNA polymerase. After initiation quickly degrades to an ADP-DnaA complex that is not apt for DNA replication. Binds acidic phospholipids. The polypeptide is Chromosomal replication initiator protein DnaA (Ehrlichia ruminantium (strain Gardel)).